The following is a 256-amino-acid chain: ATP synthase peripheral stalk subunit b, mitochondrial (256 aa).

Residues 1–42 constitute a mitochondrion transit peptide; the sequence is MLSRVVLSAAATAAPCLKNAAALGPGVLQATRAFHTGQPRLA. Lys131 is subject to N6-succinyllysine. N6-acetyllysine occurs at positions 139, 154, 162, 221, 225, 233, and 244.

Belongs to the eukaryotic ATPase B chain family. In terms of assembly, component of the ATP synthase complex composed at least of ATP5F1A/subunit alpha, ATP5F1B/subunit beta, ATP5MC1/subunit c (homooctomer), MT-ATP6/subunit a, MT-ATP8/subunit 8, ATP5ME/subunit e, ATP5MF/subunit f, ATP5MG/subunit g, ATP5MK/subunit k, ATP5MJ/subunit j, ATP5F1C/subunit gamma, ATP5F1D/subunit delta, ATP5F1E/subunit epsilon, ATP5PF/subunit F6, ATP5PB/subunit b, ATP5PD/subunit d, ATP5PO/subunit OSCP. ATP synthase complex consists of a soluble F(1) head domain (subunits alpha(3) and beta(3)) - the catalytic core - and a membrane F(0) domain - the membrane proton channel (subunits c, a, 8, e, f, g, k and j). These two domains are linked by a central stalk (subunits gamma, delta, and epsilon) rotating inside the F1 region and a stationary peripheral stalk (subunits F6, b, d, and OSCP).

It localises to the mitochondrion. Its subcellular location is the mitochondrion inner membrane. Its function is as follows. Subunit b, of the mitochondrial membrane ATP synthase complex (F(1)F(0) ATP synthase or Complex V) that produces ATP from ADP in the presence of a proton gradient across the membrane which is generated by electron transport complexes of the respiratory chain. ATP synthase complex consist of a soluble F(1) head domain - the catalytic core - and a membrane F(1) domain - the membrane proton channel. These two domains are linked by a central stalk rotating inside the F(1) region and a stationary peripheral stalk. During catalysis, ATP synthesis in the catalytic domain of F(1) is coupled via a rotary mechanism of the central stalk subunits to proton translocation. In vivo, can only synthesize ATP although its ATP hydrolase activity can be activated artificially in vitro. Part of the complex F(0) domain. Part of the complex F(0) domain and the peripheric stalk, which acts as a stator to hold the catalytic alpha(3)beta(3) subcomplex and subunit a/ATP6 static relative to the rotary elements. In Mus musculus (Mouse), this protein is ATP synthase peripheral stalk subunit b, mitochondrial.